The primary structure comprises 1216 residues: Sodium/potassium/calcium exchanger 1 (1216 aa).

The Extracellular segment spans residues 1–446 (MGKLIRMGAQ…DLFSVEERRQ (446 aa)). The disordered stretch occupies residues 94-196 (EATAGRDGTP…KYSPSPLGRM (103 aa)). Composition is skewed to polar residues over residues 110 to 135 (NTPS…TPTG) and 144 to 166 (SATP…SYTR). Residues Asn290 and Asn303 are each glycosylated (N-linked (GlcNAc...) asparagine). Residues 447–467 (GWVVLHIFGMMYVFVALAIVC) form a helical membrane-spanning segment. Topologically, residues 468-491 (DEYFVPALGVITDKLQISEDVAGA) are cytoplasmic. The Alpha-1 repeat unit spans residues 488–528 (VAGATFMAAGGSAPELFTSLIGVFISHSNVGIGTIVGSAVF). A helical transmembrane segment spans residues 492 to 512 (TFMAAGGSAPELFTSLIGVFI). Over 513 to 518 (SHSNVG) the chain is Extracellular. The helical transmembrane segment at 519–539 (IGTIVGSAVFNILFVIGTCAL) threads the bilayer. The Cytoplasmic segment spans residues 540 to 557 (FSREILNLTWWPLFRDIT). The chain crosses the membrane as a helical span at residues 558-578 (FYIFDLMMLILFFLDSLIAWW). Position 579 (Glu579) is a topological domain, extracellular. The helical transmembrane segment at 580 to 600 (SVLLLLAYAFYVFTMKWNQQL) threads the bilayer. Topologically, residues 601 to 1024 (ELWVKEQLNK…SLEWPETRRK (424 aa)) are cytoplasmic. Phosphoserine is present on Ser652. Residues 677–1018 (GEARPSKDKE…ENEQPLSLEW (342 aa)) are disordered. The span at 702-712 (AESKPEEEPAK) shows a compositional bias: basic and acidic residues. Thr717 carries the post-translational modification Phosphothreonine. A 1; approximate repeat occupies 796–811 (DEDEGEIQAEGGEVKG). An 8 X 17 AA tandem repeats of D-E-D-E-G-E-I-Q-A-G-E-[GA]-G-E-V-[EK]-G region spans residues 796–928 (DEDEGEIQAE…QAGEAGEVEG (133 aa)). 6 consecutive repeat copies span residues 812 to 828 (DEDE…EVEG), 829 to 845 (DEDE…EVEG), 846 to 862 (DEDE…EVEG), 863 to 879 (DEDE…EVEG), 880 to 896 (DEDE…EVEG), and 897 to 913 (DEDE…EVKG). 7 stretches are compositionally biased toward acidic residues: residues 824 to 834 (GEVEGDEDEGE), 841 to 851 (GEVEGDEDEGE), 858 to 868 (GEVEGDEDEGE), 875 to 885 (GEVEGDEDEGE), 892 to 902 (GEVEGDEDEGE), 924 to 941 (GEVE…DEGE), and 981 to 1011 (GDSE…EENE). One copy of the 8; approximate repeat lies at 914 to 928 (DEGEIQAGEAGEVEG). The helical transmembrane segment at 1025 to 1045 (QAIYLFLLPIVFPLWLTVPDV) threads the bilayer. The Extracellular portion of the chain corresponds to 1046–1052 (RRLEAKK). The helical transmembrane segment at 1053–1073 (FFVITFLGSILWIAMFSYLMV) threads the bilayer. Residues 1074–1088 (WWAHQVGETIGISEE) are Cytoplasmic-facing. Residues 1089–1109 (IMGLTILAAGTSIPDLITSVI) traverse the membrane as a helical segment. One copy of the Alpha-2 repeat lies at 1096–1127 (AAGTSIPDLITSVIVARKGLGDMAVSSSVGSN). Residues 1110–1127 (VARKGLGDMAVSSSVGSN) lie on the Extracellular side of the membrane. A helical transmembrane segment spans residues 1128–1148 (IFDITVGLPLPWMLFSLINGL). Residues 1149–1157 (QPVAVSSNG) lie on the Cytoplasmic side of the membrane. The helical transmembrane segment at 1158-1178 (LFCAIVLLFLMLLFVISSIAL) threads the bilayer. Topologically, residues 1179-1185 (CKWRMNK) are extracellular. Residues 1186–1206 (ILGFTMFLLYFVFLIISVMLE) form a helical membrane-spanning segment. Residues 1207–1216 (DRIISCPVSV) are Cytoplasmic-facing.

It belongs to the Ca(2+):cation antiporter (CaCA) (TC 2.A.19) family. SLC24A subfamily. Post-translationally, the uncleaved signal sequence is required for efficient membrane targeting and proper membrane integration and topology. Glycosylated. As to expression, retina.

It is found in the cell membrane. The catalysed reaction is Ca(2+)(out) + K(+)(out) + 4 Na(+)(in) = Ca(2+)(in) + K(+)(in) + 4 Na(+)(out). In terms of biological role, calcium, potassium:sodium antiporter that transports 1 Ca(2+) and 1 K(+) in exchange for 4 Na(+). Critical component of the visual transduction cascade, controlling the calcium concentration of outer segments during light and darkness. Light causes a rapid lowering of cytosolic free calcium in the outer segment of both retinal rod and cone photoreceptors and the light-induced lowering of calcium is caused by extrusion via this protein which plays a key role in the process of light adaptation. This Bos taurus (Bovine) protein is Sodium/potassium/calcium exchanger 1 (SLC24A1).